We begin with the raw amino-acid sequence, 75 residues long: Beta-defensin 30 (75 aa).

The signal sequence occupies residues 1-22 (MGSLQLILVLFVLLSDVPPVRS). Disulfide bonds link cysteine 35/cysteine 62, cysteine 42/cysteine 56, and cysteine 46/cysteine 63.

It belongs to the beta-defensin family.

Its subcellular location is the secreted. Has antibacterial activity. This Rattus norvegicus (Rat) protein is Beta-defensin 30 (Defb30).